The sequence spans 208 residues: Uracil phosphoribosyltransferase (208 aa).

Residues Arg-78, Arg-103, and Asp-130–Thr-138 each bind 5-phospho-alpha-D-ribose 1-diphosphate. Uracil is bound by residues Ile-193 and Gly-198–Ala-200. Asp-199 lines the 5-phospho-alpha-D-ribose 1-diphosphate pocket.

Belongs to the UPRTase family. Mg(2+) is required as a cofactor.

The catalysed reaction is UMP + diphosphate = 5-phospho-alpha-D-ribose 1-diphosphate + uracil. It participates in pyrimidine metabolism; UMP biosynthesis via salvage pathway; UMP from uracil: step 1/1. Its activity is regulated as follows. Allosterically activated by GTP. In terms of biological role, catalyzes the conversion of uracil and 5-phospho-alpha-D-ribose 1-diphosphate (PRPP) to UMP and diphosphate. The polypeptide is Uracil phosphoribosyltransferase (Campylobacter jejuni subsp. jejuni serotype O:6 (strain 81116 / NCTC 11828)).